Consider the following 296-residue polypeptide: Formylmethanofuran--tetrahydromethanopterin formyltransferase (296 aa).

The protein belongs to the FTR family. Homotetramer composed of two dimers. Dimerization is sufficient for enzyme activity, but tetramerization is required for high thermostability.

The protein resides in the cytoplasm. The catalysed reaction is N-formylmethanofuran + 5,6,7,8-tetrahydromethanopterin + H(+) = N(5)-formyl-5,6,7,8-tetrahydromethanopterin + methanofuran. The protein operates within one-carbon metabolism; methanogenesis from CO(2); 5,10-methenyl-5,6,7,8-tetrahydromethanopterin from CO(2): step 2/3. Its activity is regulated as follows. Requires high salt concentrations for activity and thermostability; 1.5-1.8 M KH(2)PO(4) stimulates activity while stabilizing the enzyme. Its function is as follows. Catalyzes the reversible transfer of a formyl group from formylmethanofuran (formyl-MFR) to tetrahydromethanopterin (H(4)MPT) to produce 5-formyl tetrahydromethanopterin (5-formyl-H(4)MPT) and methanofuran (MFR). Acts via a ternary-complex mechanism. Uses N-furfurylformamide much less efficiently, does not use N-methylformamide or formamide. Protein overexpressed in E.coli has very similar properties to enzyme purified from M.kandleri. The chain is Formylmethanofuran--tetrahydromethanopterin formyltransferase from Methanopyrus kandleri (strain AV19 / DSM 6324 / JCM 9639 / NBRC 100938).